Here is a 547-residue protein sequence, read N- to C-terminus: Chaperonin GroEL (547 aa).

Residues 29-32, Lys50, 86-90, Gly414, and Asp495 contribute to the ATP site; these read TLGP and DGTTT. The tract at residues 525 to 547 is disordered; it reads PSDKEDSIPPMRGGMGGMGGMDF. Residues 537–547 are compositionally biased toward gly residues; it reads GGMGGMGGMDF.

It belongs to the chaperonin (HSP60) family. In terms of assembly, forms a cylinder of 14 subunits composed of two heptameric rings stacked back-to-back. Interacts with the co-chaperonin GroES.

It is found in the cytoplasm. It carries out the reaction ATP + H2O + a folded polypeptide = ADP + phosphate + an unfolded polypeptide.. Functionally, together with its co-chaperonin GroES, plays an essential role in assisting protein folding. The GroEL-GroES system forms a nano-cage that allows encapsulation of the non-native substrate proteins and provides a physical environment optimized to promote and accelerate protein folding. This Rickettsia felis (strain ATCC VR-1525 / URRWXCal2) (Rickettsia azadi) protein is Chaperonin GroEL.